A 305-amino-acid polypeptide reads, in one-letter code: Acetyl-coenzyme A carboxylase carboxyl transferase subunit alpha (305 aa).

In terms of domain architecture, CoA carboxyltransferase C-terminal spans 33–280 (AKLESSTALS…KEQILKDLAD (248 aa)).

It belongs to the AccA family. As to quaternary structure, acetyl-CoA carboxylase is a heterohexamer composed of biotin carboxyl carrier protein (AccB), biotin carboxylase (AccC) and two subunits each of ACCase subunit alpha (AccA) and ACCase subunit beta (AccD).

Its subcellular location is the cytoplasm. It carries out the reaction N(6)-carboxybiotinyl-L-lysyl-[protein] + acetyl-CoA = N(6)-biotinyl-L-lysyl-[protein] + malonyl-CoA. Its pathway is lipid metabolism; malonyl-CoA biosynthesis; malonyl-CoA from acetyl-CoA: step 1/1. Functionally, component of the acetyl coenzyme A carboxylase (ACC) complex. First, biotin carboxylase catalyzes the carboxylation of biotin on its carrier protein (BCCP) and then the CO(2) group is transferred by the carboxyltransferase to acetyl-CoA to form malonyl-CoA. In Treponema denticola (strain ATCC 35405 / DSM 14222 / CIP 103919 / JCM 8153 / KCTC 15104), this protein is Acetyl-coenzyme A carboxylase carboxyl transferase subunit alpha.